A 106-amino-acid chain; its full sequence is ATPase inhibitor, mitochondrial (106 aa).

A mitochondrion-targeting transit peptide spans 1–25 (MAGSALAVRARFGVWGMKVLQTRGF). An N-terminal inhibitory region region spans residues 26–52 (VSDSSDSMDTGAGSIREAGGAFGKREK). The disordered stretch occupies residues 26–58 (VSDSSDSMDTGAGSIREAGGAFGKREKAEEDRY). A Phosphoserine modification is found at S39. Positions 48–58 (GKREKAEEDRY) are enriched in basic and acidic residues. Positions 60–106 (REKTKEQLAALRKHHEDEIDHHSKEIERLQKQIERHKKKIQQLKNNH) form a coiled coil. The segment at 74-106 (HEDEIDHHSKEIERLQKQIERHKKKIQQLKNNH) is antiparallel alpha-helical coiled coil region. The residue at position 103 (K103) is an N6-succinyllysine.

It belongs to the ATPase inhibitor family. In terms of assembly, homodimer; represents the active form and is present at a pH value below 6.5. Homotetramer; represents the inactive form and is present at a pH value above 7.0.

The protein localises to the mitochondrion. Endogenous F(1)F(o)-ATPase inhibitor limiting ATP depletion when the mitochondrial membrane potential falls below a threshold and the F(1)F(o)-ATP synthase starts hydrolyzing ATP to pump protons out of the mitochondrial matrix. Required to avoid the consumption of cellular ATP when the F(1)F(o)-ATP synthase enzyme acts as an ATP hydrolase. Indirectly acts as a regulator of heme synthesis in erythroid tissues: regulates heme synthesis by modulating the mitochondrial pH and redox potential, allowing FECH to efficiently catalyze the incorporation of iron into protoporphyrin IX to produce heme. This is ATPase inhibitor, mitochondrial from Mus musculus (Mouse).